A 237-amino-acid chain; its full sequence is 2',3'-cyclic-nucleotide 3'-phosphodiesterase (237 aa).

His-21 functions as the Proton donor/acceptor in the catalytic mechanism. Thr-23 provides a ligand contact to substrate. Residues 117 to 137 (HLYTTDSHGNTVKKKSKQSQD) form a disordered region. His-167 serves as the catalytic Proton donor/acceptor. 2 residues coordinate substrate: Ser-169 and Tyr-172.

It belongs to the 2H phosphoesterase superfamily. CPD1 family.

It is found in the golgi apparatus. It carries out the reaction a nucleoside 2',3'-cyclic phosphate + H2O = a nucleoside 2'-phosphate + H(+). Involved in the metabolism of ADP-ribose 1',2'-cyclic phosphate which is produced as a consequence of tRNA splicing. The protein is 2',3'-cyclic-nucleotide 3'-phosphodiesterase (CPD1) of Debaryomyces hansenii (strain ATCC 36239 / CBS 767 / BCRC 21394 / JCM 1990 / NBRC 0083 / IGC 2968) (Yeast).